Consider the following 83-residue polypeptide: Molybdopterin synthase sulfur carrier subunit (83 aa).

The protein belongs to the MoaD family.

It functions in the pathway cofactor biosynthesis; molybdopterin biosynthesis. Functionally, involved in sulfur transfer in the conversion of molybdopterin precursor Z to molybdopterin. Probably plays a role in host phagosome maturation arrest. The polypeptide is Molybdopterin synthase sulfur carrier subunit (moaD1) (Mycobacterium tuberculosis (strain ATCC 25618 / H37Rv)).